Here is a 461-residue protein sequence, read N- to C-terminus: Photosystem II CP43 reaction center protein (461 aa).

Positions 1–2 (ME) are excised as a propeptide. At T3 the chain carries N-acetylthreonine. Residue T3 is modified to Phosphothreonine. The next 5 membrane-spanning stretches (helical) occupy residues 57–81 (LFEV…PHLA), 122–143 (LIGP…KDKS), 166–188 (KSVY…RKIT), 243–263 (KPFA…LSYS), and 279–300 (WFNN…ASQA). A [CaMn4O5] cluster-binding site is contributed by E355. Residues 435 to 459 (RARAAAAGFEKGIDRDTEPVLSMTP) form a helical membrane-spanning segment.

It belongs to the PsbB/PsbC family. PsbC subfamily. PSII is composed of 1 copy each of membrane proteins PsbA, PsbB, PsbC, PsbD, PsbE, PsbF, PsbH, PsbI, PsbJ, PsbK, PsbL, PsbM, PsbT, PsbX, PsbY, PsbZ, Psb30/Ycf12, at least 3 peripheral proteins of the oxygen-evolving complex and a large number of cofactors. It forms dimeric complexes. Binds multiple chlorophylls and provides some of the ligands for the Ca-4Mn-5O cluster of the oxygen-evolving complex. It may also provide a ligand for a Cl- that is required for oxygen evolution. PSII binds additional chlorophylls, carotenoids and specific lipids. is required as a cofactor.

It is found in the plastid. The protein localises to the chloroplast thylakoid membrane. One of the components of the core complex of photosystem II (PSII). It binds chlorophyll and helps catalyze the primary light-induced photochemical processes of PSII. PSII is a light-driven water:plastoquinone oxidoreductase, using light energy to abstract electrons from H(2)O, generating O(2) and a proton gradient subsequently used for ATP formation. This Psilotum nudum (Whisk fern) protein is Photosystem II CP43 reaction center protein.